Reading from the N-terminus, the 199-residue chain is Protein GrpE (199 aa).

This sequence belongs to the GrpE family. Homodimer.

It is found in the cytoplasm. Functionally, participates actively in the response to hyperosmotic and heat shock by preventing the aggregation of stress-denatured proteins, in association with DnaK and GrpE. It is the nucleotide exchange factor for DnaK and may function as a thermosensor. Unfolded proteins bind initially to DnaJ; upon interaction with the DnaJ-bound protein, DnaK hydrolyzes its bound ATP, resulting in the formation of a stable complex. GrpE releases ADP from DnaK; ATP binding to DnaK triggers the release of the substrate protein, thus completing the reaction cycle. Several rounds of ATP-dependent interactions between DnaJ, DnaK and GrpE are required for fully efficient folding. In Fusobacterium nucleatum subsp. nucleatum (strain ATCC 25586 / DSM 15643 / BCRC 10681 / CIP 101130 / JCM 8532 / KCTC 2640 / LMG 13131 / VPI 4355), this protein is Protein GrpE.